Here is an 819-residue protein sequence, read N- to C-terminus: Ferric-pyoverdine 358 receptor (819 aa).

An N-terminal signal peptide occupies residues 1–47 (MSKPLPSALNPLAKALLIRHSLRPRHALSRIGMGLALSSALVFQVQA). A TonB box motif is present at residues 115-122 (NTVTVTAS). Residues 166 to 276 (SIRETPQTIT…PSAVVNVIRK (111 aa)) form the TBDR plug domain. A TBDR beta-barrel domain is found at 281 to 819 (EFKSHIQAGV…NATVTLRYDF (539 aa)). The TonB C-terminal box signature appears at 802–819 (YGHYGAPRNATVTLRYDF).

Belongs to the TonB-dependent receptor family.

It localises to the cell outer membrane. In terms of biological role, specific receptor for the siderophore ferric pyoverdine (pseudobactin) 358. The protein is Ferric-pyoverdine 358 receptor (pupA) of Pseudomonas putida (Arthrobacter siderocapsulatus).